A 413-amino-acid chain; its full sequence is MSFYEELKWRNLIKDCSNETQVKELLDNNQVKFYCGFDPTSHSLTVGHLVQITMILLMQRQGHLPVILVGGATGLIGDPKETEERKLLSLENSLQNAKSIECQLKNILLNKQVEFVNNYQWLSQIDIISFLRNYGKLFNINYMLSKHAVAKRLASGISFTEFSYMILQSLDFHHLYKNHKVRLQLGGSDQWGNITSGLELIRKLEKKSDALGISTPLLLNSDGTKFGKSEKGVLWVNPSMTSPYEIYQYFLNVSDKEVINYLKMLTLIPKQEILELEKNTLENPQQRLAQKALTQNIITLIHSSDILQECIKTNQILFSNAKKESFQEKDFILLQKTLFCHSTKEDILLVDALVQTKLATSKSEAREFIKDNTIKLFNQKIKSLDFAITKKNTLFDKYVLLKKGKKNNALIVF.

Tyr34 provides a ligand contact to L-tyrosine. The short motif at 39 to 48 (PTSHSLTVGH) is the 'HIGH' region element. L-tyrosine-binding residues include Tyr164 and Gln168. A 'KMSKS' region motif is present at residues 225 to 229 (KFGKS). An ATP-binding site is contributed by Lys228. Residues 347–413 (ILLVDALVQT…GKKNNALIVF (67 aa)) form the S4 RNA-binding domain.

The protein belongs to the class-I aminoacyl-tRNA synthetase family. TyrS type 1 subfamily. In terms of assembly, homodimer.

The protein localises to the cytoplasm. The enzyme catalyses tRNA(Tyr) + L-tyrosine + ATP = L-tyrosyl-tRNA(Tyr) + AMP + diphosphate + H(+). Its function is as follows. Catalyzes the attachment of tyrosine to tRNA(Tyr) in a two-step reaction: tyrosine is first activated by ATP to form Tyr-AMP and then transferred to the acceptor end of tRNA(Tyr). This chain is Tyrosine--tRNA ligase, found in Onion yellows phytoplasma (strain OY-M).